Here is a 397-residue protein sequence, read N- to C-terminus: Phosphoglycerate kinase (397 aa).

Substrate-binding positions include 22–24 (DLN), Arg37, 60–63 (HFGR), Arg119, and Arg152. ATP contacts are provided by residues Lys202, Glu324, and 354 to 357 (GGDT).

It belongs to the phosphoglycerate kinase family. As to quaternary structure, monomer.

It localises to the cytoplasm. The catalysed reaction is (2R)-3-phosphoglycerate + ATP = (2R)-3-phospho-glyceroyl phosphate + ADP. It participates in carbohydrate degradation; glycolysis; pyruvate from D-glyceraldehyde 3-phosphate: step 2/5. The sequence is that of Phosphoglycerate kinase from Rhizorhabdus wittichii (strain DSM 6014 / CCUG 31198 / JCM 15750 / NBRC 105917 / EY 4224 / RW1) (Sphingomonas wittichii).